A 345-amino-acid chain; its full sequence is Src kinase-associated phosphoprotein 1 (345 aa).

One can recognise a PH domain in the interval 109-212 (KIFKQGYLER…WVEQIQFLVK (104 aa)). The disordered stretch occupies residues 226 to 274 (ETYDDIESTESSPVVGLTNDSENSLQEDDVYESIPGDEETEESEDENYE). Over residues 250-272 (LQEDDVYESIPGDEETEESEDEN) the composition is skewed to acidic residues. Residues 283 to 344 (FYGDYYQGLW…PKDYLTLAFD (62 aa)) form the SH3 domain.

Belongs to the SKAP family. As to quaternary structure, homodimer. Post-translationally, phosphorylated on tyrosines.

It is found in the cytoplasm. The protein resides in the nucleus. Its subcellular location is the cell membrane. Its function is as follows. Positively regulates T-cell receptor signaling. Required for optimal conjugation between T-cells and antigen-presenting cells. This Xenopus tropicalis (Western clawed frog) protein is Src kinase-associated phosphoprotein 1 (skap1).